The sequence spans 238 residues: IkB-like protein (238 aa).

4 ANK repeats span residues 48 to 80 (GSSV…IINH), 87 to 118 (GNSA…TRIC), 124 to 153 (GMTP…PTQK), and 158 to 187 (GFTA…PLYM). The Nuclear localization signal signature appears at 80-86 (HHRRDND). The short motif at 202–213 (KKKPKIIITGCK) is the Nuclear localization signal element. A PxIxITxC motif; Interaction with host PPP3CA motif is present at residues 205 to 212 (PKIIITGC). An FLCV motif motif is present at residues 227–230 (FLCV).

This sequence belongs to the asfivirus A238L family. In terms of assembly, interacts with host PPIA. Interacts with host PPP3CA/Calcineurin. Interacts with host RELA/p65; interaction of the 32 kDa form with host RELA results in the formation of a stable complex with NF-kappa-B. Interacts with host PPP3R1. Interacts with host EP300; this interaction inhibits the association of host EP300 with host RELA, JUN and NFATC2. In terms of processing, the protein exists in a 28 kDa and a 32 kDa form, probably due to post-translational modifications which are neither phosphorylation, nor sumoylation.

The protein localises to the host nucleus. Its subcellular location is the host cytoplasm. Its function is as follows. IkB-like protein that inhibits the binding of NF-kappa-B to DNA, thereby downregulating pro-inflammatory cytokine production. Forms a heterodimer with the NF-kappa-B subunit RELA/p65 and prevents the activation of the NF-kappa-B transcription factor. Inhibits calcineurin function, which is required for the induction of nuclear factor of activated T cells (NFAT)-dependent immune response genes. Prevents the binding of substrates to calcineurin without affecting the phosphatase activity. Does not contain the serine residues that are phosphorylated by host IkB kinase and thus is not degraded following stimulation of the NFkB pathway. In Ornithodoros (relapsing fever ticks), this protein is IkB-like protein (A238L).